The primary structure comprises 258 residues: MAKRLDLTDVNIYYGSFHAVADVSLAILPRSVTAFIGPSGCGKTTVLRTLNRMHEVIPGARVEGAVLLDDQDIYAPGIDPVGVRRAIGMVFQRPNPFPAMSIRNNVVAGLKLQGVRNRKVLDDTAESSLRGANLWDEVKDRLDKPGGGLSGGQQQRLCIARAIAVQPDVLLMDEPCSSLDPISTMAIEDLISELKQQYTIVIVTHNMQQAARVSDQTAFFNLEAVGKPGRLVEIASTEKIFSNPNQKATEDYISGRFG.

Positions 5 to 247 (LDLTDVNIYY…EKIFSNPNQK (243 aa)) constitute an ABC transporter domain. 37–44 (GPSGCGKT) is a binding site for ATP.

The protein belongs to the ABC transporter superfamily. Phosphate importer (TC 3.A.1.7) family. As to quaternary structure, the complex is composed of two ATP-binding proteins (PstB), two transmembrane proteins (PstC and PstA) and a solute-binding protein (PstS).

It localises to the cell membrane. The enzyme catalyses phosphate(out) + ATP + H2O = ADP + 2 phosphate(in) + H(+). Functionally, part of the ABC transporter complex PstSACB involved in phosphate import. Responsible for energy coupling to the transport system. The chain is Phosphate import ATP-binding protein PstB 1 from Mycobacterium tuberculosis (strain CDC 1551 / Oshkosh).